The primary structure comprises 56 residues: Large ribosomal subunit protein bL33 (56 aa).

The protein belongs to the bacterial ribosomal protein bL33 family.

In Rickettsia africae (strain ESF-5), this protein is Large ribosomal subunit protein bL33.